We begin with the raw amino-acid sequence, 748 residues long: Subtilisin-like protease (748 aa).

Residues 1-24 form the signal peptide; sequence MMKMELRLLVSLIFILCSISMLAA. The Inhibitor I9 domain occupies 37-115; sequence TYIVHVKKSE…ARPERTLELH (79 aa). The Peptidase S8 domain maps to 122–600; that stretch reads FLGLKQGQGL…AGHVNPVKAN (479 aa). Catalysis depends on charge relay system residues Asp147 and His206. In terms of domain architecture, PA spans 365-454; sequence PLVYPGSFGY…VEVSYAAGLT (90 aa). N-linked (GlcNAc...) asparagine glycans are attached at residues Asn376, Asn380, and Asn405. Ser533 functions as the Charge relay system in the catalytic mechanism. N-linked (GlcNAc...) asparagine glycans are attached at residues Asn675 and Asn722.

Belongs to the peptidase S8 family.

The protein localises to the secreted. Its subcellular location is the extracellular space. The protein resides in the apoplast. Required for arbuscular mycorrhiza (AM) development during AM symbiosis with AM fungi (e.g. Glomeromycota intraradices). This chain is Subtilisin-like protease, found in Medicago truncatula (Barrel medic).